We begin with the raw amino-acid sequence, 198 residues long: NADH-quinone oxidoreductase subunit C (198 aa).

This sequence belongs to the complex I 30 kDa subunit family. NDH-1 is composed of 14 different subunits. Subunits NuoB, C, D, E, F, and G constitute the peripheral sector of the complex.

Its subcellular location is the cell inner membrane. The enzyme catalyses a quinone + NADH + 5 H(+)(in) = a quinol + NAD(+) + 4 H(+)(out). NDH-1 shuttles electrons from NADH, via FMN and iron-sulfur (Fe-S) centers, to quinones in the respiratory chain. The immediate electron acceptor for the enzyme in this species is believed to be ubiquinone. Couples the redox reaction to proton translocation (for every two electrons transferred, four hydrogen ions are translocated across the cytoplasmic membrane), and thus conserves the redox energy in a proton gradient. The sequence is that of NADH-quinone oxidoreductase subunit C from Chromobacterium violaceum (strain ATCC 12472 / DSM 30191 / JCM 1249 / CCUG 213 / NBRC 12614 / NCIMB 9131 / NCTC 9757 / MK).